The sequence spans 96 residues: Large ribosomal subunit protein eL43 (96 aa).

Residues 41–62 (CPVCAFPKLKRAGTSIWVCDKC) form a C4-type zinc finger.

Belongs to the eukaryotic ribosomal protein eL43 family. It depends on Zn(2+) as a cofactor.

The chain is Large ribosomal subunit protein eL43 from Methanococcus vannielii (strain ATCC 35089 / DSM 1224 / JCM 13029 / OCM 148 / SB).